A 319-amino-acid polypeptide reads, in one-letter code: Ribonuclease Z (319 aa).

7 residues coordinate Zn(2+): histidine 62, histidine 64, aspartate 66, histidine 67, histidine 139, aspartate 210, and histidine 268. The active-site Proton acceptor is the aspartate 66.

Belongs to the RNase Z family. Homodimer. Requires Zn(2+) as cofactor.

It catalyses the reaction Endonucleolytic cleavage of RNA, removing extra 3' nucleotides from tRNA precursor, generating 3' termini of tRNAs. A 3'-hydroxy group is left at the tRNA terminus and a 5'-phosphoryl group is left at the trailer molecule.. Functionally, zinc phosphodiesterase, which displays some tRNA 3'-processing endonuclease activity. Probably involved in tRNA maturation, by removing a 3'-trailer from precursor tRNA. This chain is Ribonuclease Z, found in Nostoc punctiforme (strain ATCC 29133 / PCC 73102).